Consider the following 360-residue polypeptide: Phospho-N-acetylmuramoyl-pentapeptide-transferase (360 aa).

The next 10 helical transmembrane spans lie at 21–41, 74–94, 97–117, 135–155, 168–188, 199–219, 236–256, 263–283, 288–308, and 338–358; these read YVTF…LWWG, MGGL…GDLG, YVWV…IDDY, LLQS…ADTA, VMPQ…VGSS, GLAI…AYLS, AGEL…FLWF, VFMG…IAVL, ILLV…ILQV, and VIVR…ATLK.

This sequence belongs to the glycosyltransferase 4 family. MraY subfamily. Mg(2+) is required as a cofactor.

Its subcellular location is the cell inner membrane. The enzyme catalyses UDP-N-acetyl-alpha-D-muramoyl-L-alanyl-gamma-D-glutamyl-meso-2,6-diaminopimeloyl-D-alanyl-D-alanine + di-trans,octa-cis-undecaprenyl phosphate = di-trans,octa-cis-undecaprenyl diphospho-N-acetyl-alpha-D-muramoyl-L-alanyl-D-glutamyl-meso-2,6-diaminopimeloyl-D-alanyl-D-alanine + UMP. It participates in cell wall biogenesis; peptidoglycan biosynthesis. Catalyzes the initial step of the lipid cycle reactions in the biosynthesis of the cell wall peptidoglycan: transfers peptidoglycan precursor phospho-MurNAc-pentapeptide from UDP-MurNAc-pentapeptide onto the lipid carrier undecaprenyl phosphate, yielding undecaprenyl-pyrophosphoryl-MurNAc-pentapeptide, known as lipid I. In Shewanella piezotolerans (strain WP3 / JCM 13877), this protein is Phospho-N-acetylmuramoyl-pentapeptide-transferase.